The following is a 524-amino-acid chain: Anthranilate synthase component 1 (524 aa).

Residues Ser-55 and 297-299 each bind L-tryptophan; that span reads PYM. 332–333 provides a ligand contact to chorismate; it reads GT. Glu-359 lines the Mg(2+) pocket. Chorismate-binding positions include Tyr-447, Arg-467, 485–487, and Gly-487; that span reads GAG. Mg(2+) is bound at residue Glu-500.

It belongs to the anthranilate synthase component I family. Heterotetramer consisting of two non-identical subunits: a beta subunit (TrpG) and a large alpha subunit (TrpE). Mg(2+) serves as cofactor.

It carries out the reaction chorismate + L-glutamine = anthranilate + pyruvate + L-glutamate + H(+). It functions in the pathway amino-acid biosynthesis; L-tryptophan biosynthesis; L-tryptophan from chorismate: step 1/5. Feedback inhibited by tryptophan. In terms of biological role, part of a heterotetrameric complex that catalyzes the two-step biosynthesis of anthranilate, an intermediate in the biosynthesis of L-tryptophan. In the first step, the glutamine-binding beta subunit (TrpG) of anthranilate synthase (AS) provides the glutamine amidotransferase activity which generates ammonia as a substrate that, along with chorismate, is used in the second step, catalyzed by the large alpha subunit of AS (TrpE) to produce anthranilate. In the absence of TrpG, TrpE can synthesize anthranilate directly from chorismate and high concentrations of ammonia. The sequence is that of Anthranilate synthase component 1 (trpE) from Haloferax volcanii (strain ATCC 29605 / DSM 3757 / JCM 8879 / NBRC 14742 / NCIMB 2012 / VKM B-1768 / DS2) (Halobacterium volcanii).